We begin with the raw amino-acid sequence, 295 residues long: Pyridoxal 5'-phosphate synthase subunit PdxS (295 aa).

Asp-25 serves as a coordination point for D-ribose 5-phosphate. Lys-82 serves as the catalytic Schiff-base intermediate with D-ribose 5-phosphate. Gly-154 contributes to the D-ribose 5-phosphate binding site. Arg-166 contributes to the D-glyceraldehyde 3-phosphate binding site. D-ribose 5-phosphate-binding positions include Gly-215 and 236–237; that span reads GS.

It belongs to the PdxS/SNZ family. As to quaternary structure, in the presence of PdxT, forms a dodecamer of heterodimers.

It catalyses the reaction aldehydo-D-ribose 5-phosphate + D-glyceraldehyde 3-phosphate + L-glutamine = pyridoxal 5'-phosphate + L-glutamate + phosphate + 3 H2O + H(+). Its pathway is cofactor biosynthesis; pyridoxal 5'-phosphate biosynthesis. Its function is as follows. Catalyzes the formation of pyridoxal 5'-phosphate from ribose 5-phosphate (RBP), glyceraldehyde 3-phosphate (G3P) and ammonia. The ammonia is provided by the PdxT subunit. Can also use ribulose 5-phosphate and dihydroxyacetone phosphate as substrates, resulting from enzyme-catalyzed isomerization of RBP and G3P, respectively. The chain is Pyridoxal 5'-phosphate synthase subunit PdxS from Bacillus cereus (strain B4264).